Reading from the N-terminus, the 446-residue chain is Eukaryotic translation initiation factor 3 subunit E (446 aa).

A PCI domain is found at 240–420; the sequence is PLFNDENSRE…GTVVMNHPNS (181 aa).

This sequence belongs to the eIF-3 subunit E family. As to quaternary structure, component of the eukaryotic translation initiation factor 3 (eIF-3) complex.

It localises to the cytoplasm. In terms of biological role, component of the eukaryotic translation initiation factor 3 (eIF-3) complex, which is involved in protein synthesis of a specialized repertoire of mRNAs and, together with other initiation factors, stimulates binding of mRNA and methionyl-tRNAi to the 40S ribosome. The eIF-3 complex specifically targets and initiates translation of a subset of mRNAs involved in cell proliferation. The polypeptide is Eukaryotic translation initiation factor 3 subunit E (Pyricularia oryzae (strain 70-15 / ATCC MYA-4617 / FGSC 8958) (Rice blast fungus)).